We begin with the raw amino-acid sequence, 447 residues long: Hydroxymethylglutaryl-CoA synthase (447 aa).

Glu-86 acts as the Proton donor/acceptor in catalysis. Cys-118 acts as the Acyl-thioester intermediate in catalysis. The (3S)-3-hydroxy-3-methylglutaryl-CoA site is built by Cys-118, Asn-156, Thr-160, Ser-210, His-250, Lys-259, Asn-327, and Ser-361. Residue His-250 is the Proton donor/acceptor of the active site. Thr-398 bears the Phosphothreonine mark.

It belongs to the thiolase-like superfamily. HMG-CoA synthase family.

It carries out the reaction acetoacetyl-CoA + acetyl-CoA + H2O = (3S)-3-hydroxy-3-methylglutaryl-CoA + CoA + H(+). Its pathway is metabolic intermediate biosynthesis; (R)-mevalonate biosynthesis; (R)-mevalonate from acetyl-CoA: step 2/3. Its function is as follows. Hydroxymethylglutaryl-CoA synthase; part of the first module of ergosterol biosynthesis pathway that includes the early steps of the pathway, conserved across all eukaryotes, and which results in the formation of mevalonate from acetyl-coenzyme A (acetyl-CoA). Hcs1 condenses acetyl-CoA with acetoacetyl-CoA to form hydroxymethylglutaryl-CoA (HMG-CoA). The first module starts with the action of the cytosolic acetyl-CoA acetyltransferase eg10 that catalyzes the formation of acetoacetyl-CoA. The hydroxymethylglutaryl-CoA synthases erg13 then condenses acetyl-CoA with acetoacetyl-CoA to form HMG-CoA. The rate-limiting step of the early module is the reduction to mevalonate by the 3-hydroxy-3-methylglutaryl-coenzyme A (HMG-CoA) reductases hcs1. This is Hydroxymethylglutaryl-CoA synthase from Schizosaccharomyces pombe (strain 972 / ATCC 24843) (Fission yeast).